A 401-amino-acid polypeptide reads, in one-letter code: Tryptophan synthase beta chain (401 aa).

An N6-(pyridoxal phosphate)lysine modification is found at lysine 91.

The protein belongs to the TrpB family. In terms of assembly, tetramer of two alpha and two beta chains. Pyridoxal 5'-phosphate serves as cofactor.

The enzyme catalyses (1S,2R)-1-C-(indol-3-yl)glycerol 3-phosphate + L-serine = D-glyceraldehyde 3-phosphate + L-tryptophan + H2O. It participates in amino-acid biosynthesis; L-tryptophan biosynthesis; L-tryptophan from chorismate: step 5/5. The beta subunit is responsible for the synthesis of L-tryptophan from indole and L-serine. This is Tryptophan synthase beta chain from Lactococcus lactis subsp. cremoris (strain MG1363).